A 723-amino-acid chain; its full sequence is Nucleolar protein 11 (723 aa).

The residue at position 346 (K346) is an N6-methyllysine. The disordered stretch occupies residues 549 to 572; the sequence is FGPEDGNCSEDSQQLNDKPADTAH.

As to quaternary structure, interacts with UTP4. Interacts with FBL/fibrillarin in a transcription-dependent manner. May associate with the proposed t-UTP subcomplex of the SSU processome containing at least UTP4, WDR43, HEATR1, UTP15, WDR75.

It localises to the nucleus. It is found in the nucleolus. Functionally, ribosome biogenesis factor. May be required for both optimal rDNA transcription and small subunit (SSU) pre-rRNA processing at sites A', A0, 1 and 2b. This is Nucleolar protein 11 (Nol11) from Mus musculus (Mouse).